The primary structure comprises 315 residues: UDP-N-acetylenolpyruvoylglucosamine reductase (315 aa).

The 181-residue stretch at 27 to 207 folds into the FAD-binding PCMH-type domain; the sequence is RVGGPADVLY…TKRMNAITAR (181 aa). The active site involves R172. The tract at residues 214-236 is disordered; sequence IREKTSGSTFANPDPPGTPNQRK. The Proton donor role is filled by S221. E297 is an active-site residue.

The protein belongs to the MurB family. Requires FAD as cofactor.

The protein localises to the cytoplasm. It catalyses the reaction UDP-N-acetyl-alpha-D-muramate + NADP(+) = UDP-N-acetyl-3-O-(1-carboxyvinyl)-alpha-D-glucosamine + NADPH + H(+). Its pathway is cell wall biogenesis; peptidoglycan biosynthesis. Its function is as follows. Cell wall formation. This chain is UDP-N-acetylenolpyruvoylglucosamine reductase, found in Maricaulis maris (strain MCS10) (Caulobacter maris).